The sequence spans 158 residues: D-aminoacyl-tRNA deacylase (158 aa).

The Gly-cisPro motif, important for rejection of L-amino acids motif lies at 144–145 (GP).

This sequence belongs to the DTD family. In terms of assembly, homodimer.

It is found in the cytoplasm. It carries out the reaction glycyl-tRNA(Ala) + H2O = tRNA(Ala) + glycine + H(+). The catalysed reaction is a D-aminoacyl-tRNA + H2O = a tRNA + a D-alpha-amino acid + H(+). Its function is as follows. An aminoacyl-tRNA editing enzyme that deacylates mischarged D-aminoacyl-tRNAs. Also deacylates mischarged glycyl-tRNA(Ala), protecting cells against glycine mischarging by AlaRS. Acts via tRNA-based rather than protein-based catalysis; rejects L-amino acids rather than detecting D-amino acids in the active site. By recycling D-aminoacyl-tRNA to D-amino acids and free tRNA molecules, this enzyme counteracts the toxicity associated with the formation of D-aminoacyl-tRNA entities in vivo and helps enforce protein L-homochirality. In Corynebacterium kroppenstedtii (strain DSM 44385 / JCM 11950 / CIP 105744 / CCUG 35717), this protein is D-aminoacyl-tRNA deacylase.